Consider the following 846-residue polypeptide: Selenocysteine insertion sequence-binding protein 2 (846 aa).

Basic and acidic residues-rich tracts occupy residues 151–165 (RRAW…RRAD) and 206–215 (PEFEFSRLDF). Disordered stretches follow at residues 151-246 (RRAW…SNMS), 266-288 (TDHT…TREL), 321-440 (TTSS…VPVQ), 448-467 (AALE…RPVV), and 475-613 (VLSK…DSAT). A Phosphoserine modification is found at S220. Polar residues-rich tracts occupy residues 220–232 (SPKN…TQKQ), 272–288 (AVTN…TREL), and 321–342 (TTSS…SDPS). Positions 370 to 380 (KKNKKKKEKSK) match the Nuclear localization signal motif. Residues 417 to 428 (KLQSKQQAQNDF) are compositionally biased toward polar residues. Positions 527–536 (ILKERQERMQ) are enriched in basic and acidic residues. Over residues 542 to 551 (SAVSPTVASD) the composition is skewed to polar residues. An RNA-binding region spans residues 666-687 (LVLGLREVLKHLKLRKLKCIII). The tract at residues 774–804 (RQEQAGEPGPQTPPSPPMQDPIQSTDEGTLA) is disordered. The segment covering 783–792 (PQTPPSPPMQ) has biased composition (pro residues).

In terms of tissue distribution, ubiquitous.

The protein localises to the cytoplasm. It is found in the nucleus. In terms of biological role, mRNA-binding protein that binds to the SECIS (selenocysteine insertion sequence) element present in the 3'-UTR of mRNAs encoding selenoproteins and facilitates the incorporation of the rare amino acid selenocysteine. Insertion of selenocysteine at UGA codons is mediated by SECISBP2 and EEFSEC: SECISBP2 (1) specifically binds the SECIS sequence once the 80S ribosome encounters an in-frame UGA codon and (2) contacts the RPS27A/eS31 of the 40S ribosome before ribosome stalling. (3) GTP-bound EEFSEC then delivers selenocysteinyl-tRNA(Sec) to the 80S ribosome and adopts a preaccommodated state conformation. (4) After GTP hydrolysis, EEFSEC dissociates from the assembly, selenocysteinyl-tRNA(Sec) accommodates, and peptide bond synthesis and selenoprotein elongation occur. The chain is Selenocysteine insertion sequence-binding protein 2 (Secisbp2) from Rattus norvegicus (Rat).